We begin with the raw amino-acid sequence, 337 residues long: Fructose-1,6-bisphosphatase class 1 (337 aa).

The Mg(2+) site is built by E89, D112, L114, and D115. Substrate is bound by residues 115–118, N208, Y241, and K271; that span reads DGSS. E277 contacts Mg(2+).

It belongs to the FBPase class 1 family. As to quaternary structure, homotetramer. Mg(2+) serves as cofactor.

Its subcellular location is the cytoplasm. The enzyme catalyses beta-D-fructose 1,6-bisphosphate + H2O = beta-D-fructose 6-phosphate + phosphate. It functions in the pathway carbohydrate biosynthesis; gluconeogenesis. The sequence is that of Fructose-1,6-bisphosphatase class 1 from Yersinia pseudotuberculosis serotype O:1b (strain IP 31758).